The primary structure comprises 993 residues: UPF0182 protein ROP_64500 (993 aa).

The next 7 membrane-spanning stretches (helical) occupy residues valine 18 to serine 38, leucine 63 to leucine 83, leucine 114 to serine 134, tryptophan 174 to glycine 194, valine 211 to aspartate 231, lysine 260 to leucine 280, and methionine 288 to valine 308. The disordered stretch occupies residues threonine 904–valine 948. Residues alanine 908–proline 926 are compositionally biased toward low complexity. Residues proline 933–proline 942 show a composition bias toward pro residues.

It belongs to the UPF0182 family.

Its subcellular location is the cell membrane. This is UPF0182 protein ROP_64500 from Rhodococcus opacus (strain B4).